Reading from the N-terminus, the 216-residue chain is Ribosomal RNA small subunit methyltransferase G (216 aa).

S-adenosyl-L-methionine contacts are provided by residues Gly-73, Leu-78, 124–125, and Arg-139; that span reads AE.

Belongs to the methyltransferase superfamily. RNA methyltransferase RsmG family.

It localises to the cytoplasm. Its function is as follows. Specifically methylates the N7 position of guanine in position 518 of 16S rRNA. In Pseudarthrobacter chlorophenolicus (strain ATCC 700700 / DSM 12829 / CIP 107037 / JCM 12360 / KCTC 9906 / NCIMB 13794 / A6) (Arthrobacter chlorophenolicus), this protein is Ribosomal RNA small subunit methyltransferase G.